The sequence spans 438 residues: 2-(3-amino-3-carboxypropyl)histidine synthase subunit 1 (438 aa).

Positions 7–29 (SGAAEQGGRDGPGRGRAPRGRVA) are disordered. The [4Fe-4S] cluster site is built by cysteine 110, cysteine 214, and cysteine 342. The interval 391 to 421 (VNHGQDRRPHAPGRPARGKVQEGSARPPSAV) is disordered.

The protein belongs to the DPH1/DPH2 family. DPH1 subfamily. Component of the 2-(3-amino-3-carboxypropyl)histidine synthase complex composed of DPH1, DPH2, DPH3 and a NADH-dependent reductase. Interacts with DPH2. Interacts with RBM8A. It depends on [4Fe-4S] cluster as a cofactor. As to expression, expressed in heart, brain, placenta, lung, liver, skeletal muscle, kidney, pancreas, spleen, thymus, mammary gland, colon, small intestine, testis and ovary. Reduced expression in primary breast and ovarian tumors.

It is found in the nucleus. It localises to the cytoplasm. The enzyme catalyses L-histidyl-[translation elongation factor 2] + S-adenosyl-L-methionine = 2-[(3S)-amino-3-carboxypropyl]-L-histidyl-[translation elongation factor 2] + S-methyl-5'-thioadenosine + H(+). It functions in the pathway protein modification; peptidyl-diphthamide biosynthesis. Functionally, catalyzes the first step of diphthamide biosynthesis, a post-translational modification of histidine which occurs in elongation factor 2. DPH1 and DPH2 transfer a 3-amino-3-carboxypropyl (ACP) group from S-adenosyl-L-methionine (SAM) to a histidine residue, the reaction is assisted by a reduction system comprising DPH3 and a NADH-dependent reductase. Acts as a tumor suppressor. This is 2-(3-amino-3-carboxypropyl)histidine synthase subunit 1 from Homo sapiens (Human).